The primary structure comprises 116 residues: Non-specific lipid-transfer protein D, cotyledon-specific isoform (116 aa).

The signal sequence occupies residues 1–24 (MKNIFFSVFFLLSFLLCLANVSEA). 4 disulfide bridges follow: cysteine 28-cysteine 76, cysteine 38-cysteine 53, cysteine 54-cysteine 98, and cysteine 74-cysteine 112.

This sequence belongs to the plant LTP family.

In terms of biological role, plant non-specific lipid-transfer proteins transfer phospholipids as well as galactolipids across membranes. May play a role in wax or cutin deposition in the cell walls of expanding epidermal cells and certain secretory tissues. This Ricinus communis (Castor bean) protein is Non-specific lipid-transfer protein D, cotyledon-specific isoform.